A 401-amino-acid chain; its full sequence is Riboflavin biosynthesis protein RibBA (401 aa).

The tract at residues 1–203 (MTDFQFSKVE…IQQLQEYRRK (203 aa)) is DHBP synthase. D-ribulose 5-phosphate is bound by residues 30 to 31 (RE), D35, 142 to 146 (RNGHT), and E166. Residue E31 coordinates Mg(2+). A Mg(2+)-binding site is contributed by H145. The segment at 204-401 (HDSLVKQISV…QIKMGHMFNF (198 aa)) is GTP cyclohydrolase II. Residue 254-258 (RIHSE) coordinates GTP. 3 residues coordinate Zn(2+): C259, C270, and C272. Residues Q275, 297 to 299 (EGR), and T319 each bind GTP. Catalysis depends on D331, which acts as the Proton acceptor; for GTP cyclohydrolase activity. R333 serves as the catalytic Nucleophile; for GTP cyclohydrolase activity. GTP contacts are provided by T354 and K359.

In the N-terminal section; belongs to the DHBP synthase family. The protein in the C-terminal section; belongs to the GTP cyclohydrolase II family. Mg(2+) serves as cofactor. The cofactor is Mn(2+). Zn(2+) is required as a cofactor.

It carries out the reaction D-ribulose 5-phosphate = (2S)-2-hydroxy-3-oxobutyl phosphate + formate + H(+). It catalyses the reaction GTP + 4 H2O = 2,5-diamino-6-hydroxy-4-(5-phosphoribosylamino)-pyrimidine + formate + 2 phosphate + 3 H(+). Its pathway is cofactor biosynthesis; riboflavin biosynthesis; 2-hydroxy-3-oxobutyl phosphate from D-ribulose 5-phosphate: step 1/1. It functions in the pathway cofactor biosynthesis; riboflavin biosynthesis; 5-amino-6-(D-ribitylamino)uracil from GTP: step 1/4. In terms of biological role, catalyzes the conversion of D-ribulose 5-phosphate to formate and 3,4-dihydroxy-2-butanone 4-phosphate. Catalyzes the conversion of GTP to 2,5-diamino-6-ribosylamino-4(3H)-pyrimidinone 5'-phosphate (DARP), formate and pyrophosphate. In Actinobacillus pleuropneumoniae serotype 7 (strain AP76), this protein is Riboflavin biosynthesis protein RibBA.